We begin with the raw amino-acid sequence, 585 residues long: Pheromone-processing carboxypeptidase KEX1 (585 aa).

A signal peptide spans 1–18; the sequence is MCLLARVRHIEITPDVNG. Over 19-469 the chain is Lumenal; sequence NMFFWHFQNK…DTARWEAYRK (451 aa). Active-site residues include serine 135 and aspartate 335. Residues asparagine 386 and asparagine 394 are each glycosylated (N-linked (GlcNAc...) asparagine). The active site involves histidine 397. Residue asparagine 447 is glycosylated (N-linked (GlcNAc...) asparagine). The helical transmembrane segment at 470 to 490 threads the bilayer; the sequence is SGEIVLVIVAFSAAGWGWWVW. At 491–585 the chain is on the cytoplasmic side; the sequence is RERKKRRGYM…KGKGKEKMSG (95 aa). The segment at 526–585 is disordered; sequence AADLEAGDFDENELDDLHMRTPTTVMGGEGNDPRYSVGAASEDSEDEEDVKGKGKEKMSG. The segment covering 530–539 has biased composition (acidic residues); sequence EAGDFDENEL. The span at 575–585 shows a compositional bias: basic and acidic residues; the sequence is VKGKGKEKMSG.

The protein belongs to the peptidase S10 family.

The protein resides in the golgi apparatus. Its subcellular location is the trans-Golgi network membrane. The enzyme catalyses Preferential release of a C-terminal arginine or lysine residue.. Functionally, protease with a carboxypeptidase B-like function involved in the C-terminal processing of the lysine and arginine residues from protein precursors. Promotes cell fusion and is involved in the programmed cell death. This is Pheromone-processing carboxypeptidase KEX1 (KEX1) from Podospora anserina (strain S / ATCC MYA-4624 / DSM 980 / FGSC 10383) (Pleurage anserina).